The following is a 403-amino-acid chain: Chorismate synthase (403 aa).

The NADP(+) site is built by Arg40 and Arg46. FMN contacts are provided by residues 140 to 142 (RSS) and 261 to 262 (QA). Residues 277–298 (RRGSEAHDEMVRTDEGVDRETN) are compositionally biased toward basic and acidic residues. The disordered stretch occupies residues 277–307 (RRGSEAHDEMVRTDEGVDRETNRAGGLEGGM). Residues Gly305, 320-324 (KPIST), and Arg346 each bind FMN.

This sequence belongs to the chorismate synthase family. Homotetramer. Requires FMNH2 as cofactor.

It carries out the reaction 5-O-(1-carboxyvinyl)-3-phosphoshikimate = chorismate + phosphate. The protein operates within metabolic intermediate biosynthesis; chorismate biosynthesis; chorismate from D-erythrose 4-phosphate and phosphoenolpyruvate: step 7/7. Functionally, catalyzes the anti-1,4-elimination of the C-3 phosphate and the C-6 proR hydrogen from 5-enolpyruvylshikimate-3-phosphate (EPSP) to yield chorismate, which is the branch point compound that serves as the starting substrate for the three terminal pathways of aromatic amino acid biosynthesis. This reaction introduces a second double bond into the aromatic ring system. The polypeptide is Chorismate synthase (Corynebacterium aurimucosum (strain ATCC 700975 / DSM 44827 / CIP 107346 / CN-1) (Corynebacterium nigricans)).